The primary structure comprises 459 residues: Ribulose bisphosphate carboxylase (459 aa).

Residue Asn-111 coordinates substrate. Lys-166 acts as the Proton acceptor in catalysis. Substrate is bound at residue Lys-168. Mg(2+) is bound by residues Lys-191, Asp-193, and Glu-194. The residue at position 191 (Lys-191) is an N6-carboxylysine. The Proton acceptor role is filled by His-287. Substrate-binding residues include Arg-288, His-321, and Ser-368.

The protein belongs to the RuBisCO large chain family. Type II subfamily. Homodimer. It depends on Mg(2+) as a cofactor.

It catalyses the reaction 2 (2R)-3-phosphoglycerate + 2 H(+) = D-ribulose 1,5-bisphosphate + CO2 + H2O. The catalysed reaction is D-ribulose 1,5-bisphosphate + O2 = 2-phosphoglycolate + (2R)-3-phosphoglycerate + 2 H(+). In terms of biological role, ruBisCO catalyzes two reactions: the carboxylation of D-ribulose 1,5-bisphosphate, the primary event in carbon dioxide fixation, as well as the oxidative fragmentation of the pentose substrate. Both reactions occur simultaneously and in competition at the same active site. The sequence is that of Ribulose bisphosphate carboxylase from Albidiferax ferrireducens (strain ATCC BAA-621 / DSM 15236 / T118) (Rhodoferax ferrireducens).